The chain runs to 486 residues: Virulence sensor protein PhoQ (486 aa).

Topologically, residues 1–16 (MKKLLRLFFPLSLRVR) are cytoplasmic. Residues 17-37 (FLLATAAVVLVLSLAYGMVAL) form a helical membrane-spanning segment. Over 38–194 (IGYSVSFDKT…LKSSYMVWSW (157 aa)) the chain is Periplasmic. 2 residues coordinate a divalent metal cation: aspartate 151 and aspartate 152. The helical transmembrane segment at 195 to 215 (FIYVLSANLLLVIPLLWVAAW) threads the bilayer. Positions 215–266 (WWSLRPIEALAKEVRELEEHNRELLNPATTRELTSLVRNLNRLLKSERERYD) constitute an HAMP domain. Residues 216–486 (WSLRPIEALA…GRQHSAPKDE (271 aa)) lie on the Cytoplasmic side of the membrane. One can recognise a Histidine kinase domain in the interval 274–480 (DLTHSLKTPL…RMEVIFGRQH (207 aa)). Position 277 is a phosphohistidine; by autocatalysis (histidine 277). Mg(2+) is bound at residue asparagine 385. ATP is bound by residues 385-393 (NVLDNACKY), 415-420 (DDGPGI), and 434-446 (RVDT…GVGL). Glutamine 442 contributes to the Mg(2+) binding site.

As to quaternary structure, homodimer.

Its subcellular location is the cell inner membrane. It catalyses the reaction ATP + protein L-histidine = ADP + protein N-phospho-L-histidine.. Member of the two-component regulatory system PhoP/PhoQ involved in virulence and adaptation to low Mg(2+) environments. In low periplasmic Mg(2+), PhoQ functions as a membrane-associated protein kinase that undergoes autophosphorylation and subsequently transfers the phosphate to PhoP, which results in the expression of PhoP-activated genes (PAG) and repression of PhoP-repressed genes (PRG). In high periplasmic Mg(2+), acts as a protein phosphatase that dephosphorylates phospho-PhoP, which results in the repression of PAG and may lead to expression of some PRG. Necessary for resistance to killing by polymorphonuclear leukocytes (PMNs) and cationic antimicrobial peptides (CAMP) they produce. This chain is Virulence sensor protein PhoQ (phoQ), found in Shigella flexneri.